Here is a 232-residue protein sequence, read N- to C-terminus: MSLFNTVRNTIVPVHKEGYPFVAAFFVASLILGWIFKPLFWIGMIFTLWCAYFFRDPERVTPQDDDLVISPADGKVSAIQMVTPPAELDLGSEPMLRISVFMNVFNCHVNRAPMRGRIVSINYRSGSFVNAELDKASEDNERNGLVIETKHGQIGVVQIAGLVARRILCWANTNEPMDAGERFGLIRFGSRLDVFLPAGAAPRVSLGQTAIAGETVIAEFASAKGPVISRRS.

Ser-190 functions as the Schiff-base intermediate with substrate; via pyruvic acid in the catalytic mechanism. Ser-190 is modified (pyruvic acid (Ser); by autocatalysis).

The protein belongs to the phosphatidylserine decarboxylase family. PSD-A subfamily. In terms of assembly, heterodimer of a large membrane-associated beta subunit and a small pyruvoyl-containing alpha subunit. It depends on pyruvate as a cofactor. Is synthesized initially as an inactive proenzyme. Formation of the active enzyme involves a self-maturation process in which the active site pyruvoyl group is generated from an internal serine residue via an autocatalytic post-translational modification. Two non-identical subunits are generated from the proenzyme in this reaction, and the pyruvate is formed at the N-terminus of the alpha chain, which is derived from the carboxyl end of the proenzyme. The post-translation cleavage follows an unusual pathway, termed non-hydrolytic serinolysis, in which the side chain hydroxyl group of the serine supplies its oxygen atom to form the C-terminus of the beta chain, while the remainder of the serine residue undergoes an oxidative deamination to produce ammonia and the pyruvoyl prosthetic group on the alpha chain.

Its subcellular location is the cell membrane. It carries out the reaction a 1,2-diacyl-sn-glycero-3-phospho-L-serine + H(+) = a 1,2-diacyl-sn-glycero-3-phosphoethanolamine + CO2. It functions in the pathway phospholipid metabolism; phosphatidylethanolamine biosynthesis; phosphatidylethanolamine from CDP-diacylglycerol: step 2/2. In terms of biological role, catalyzes the formation of phosphatidylethanolamine (PtdEtn) from phosphatidylserine (PtdSer). This chain is Phosphatidylserine decarboxylase proenzyme, found in Rhizobium etli (strain CIAT 652).